The primary structure comprises 263 residues: Ribonuclease HII (263 aa).

The RNase H type-2 domain occupies 71-262 (QAIAGIDEVG…VKSMCCDSTN (192 aa)). A divalent metal cation is bound by residues D77, E78, and D172.

Belongs to the RNase HII family. It depends on Mn(2+) as a cofactor. Mg(2+) is required as a cofactor.

It localises to the cytoplasm. The enzyme catalyses Endonucleolytic cleavage to 5'-phosphomonoester.. Endonuclease that specifically degrades the RNA of RNA-DNA hybrids. In Streptococcus pyogenes serotype M4 (strain MGAS10750), this protein is Ribonuclease HII.